A 202-amino-acid chain; its full sequence is Protein-methionine-sulfoxide reductase heme-binding subunit MsrQ (202 aa).

5 helical membrane passes run 8 to 28, 82 to 102, 116 to 136, 149 to 169, and 171 to 191; these read IVWLKVLLHLAGFLPLVWLFW, LWCFAWATLHLTSYTLLELGI, PYLTLGMISWAILLALAVTST, LLHNFVYLVAILAPIHYLWSV, and IVSPQPVVYALLAAGLLTWRY.

It belongs to the MsrQ family. Heterodimer of a catalytic subunit (MsrP) and a heme-binding subunit (MsrQ). FMN is required as a cofactor. Heme b serves as cofactor.

The protein localises to the cell inner membrane. Its function is as follows. Part of the MsrPQ system that repairs oxidized periplasmic proteins containing methionine sulfoxide residues (Met-O), using respiratory chain electrons. Thus protects these proteins from oxidative-stress damage caused by reactive species of oxygen and chlorine generated by the host defense mechanisms. MsrPQ is essential for the maintenance of envelope integrity under bleach stress, rescuing a wide series of structurally unrelated periplasmic proteins from methionine oxidation. MsrQ provides electrons for reduction to the reductase catalytic subunit MsrP, using the quinone pool of the respiratory chain. This chain is Protein-methionine-sulfoxide reductase heme-binding subunit MsrQ, found in Klebsiella pneumoniae subsp. pneumoniae (strain ATCC 700721 / MGH 78578).